Consider the following 405-residue polypeptide: 26S proteasome regulatory subunit 8 homolog (405 aa).

At T2 the chain carries N-acetylthreonine. An ATP-binding site is contributed by 189-196 (GPPGTGKT).

It belongs to the AAA ATPase family. As to quaternary structure, may form a homodimer or a heterodimer with a related family member. Interacts with OLA1, TMA17, and UBR1. N-acetylated by NAT1.

The protein resides in the cytoplasm. The protein localises to the nucleus. Functionally, the 26S proteasome is involved in the ATP-dependent degradation of ubiquitinated proteins. The regulatory (or ATPase) complex confers ATP dependency and substrate specificity to the 26S complex. This chain is 26S proteasome regulatory subunit 8 homolog (RPT6), found in Saccharomyces cerevisiae (strain ATCC 204508 / S288c) (Baker's yeast).